Here is a 676-residue protein sequence, read N- to C-terminus: ATP-dependent zinc metalloprotease FtsH (676 aa).

Topologically, residues Met1–His12 are cytoplasmic. Residues Met13–Thr33 form a helical membrane-spanning segment. The Extracellular portion of the chain corresponds to Lys34 to His115. A helical membrane pass occupies residues Val116–Phe136. Residues Ala137–Thr676 lie on the Cytoplasmic side of the membrane. Gly212–Thr219 provides a ligand contact to ATP. His433 provides a ligand contact to Zn(2+). The active site involves Glu434. 2 residues coordinate Zn(2+): His437 and Asp509. The segment at Glu610–Thr676 is disordered. Residues Asn615–Thr636 are compositionally biased toward polar residues. Low complexity predominate over residues Asn650–Glu667.

In the central section; belongs to the AAA ATPase family. It in the C-terminal section; belongs to the peptidase M41 family. As to quaternary structure, homohexamer. Zn(2+) is required as a cofactor.

The protein localises to the cell membrane. Acts as a processive, ATP-dependent zinc metallopeptidase for both cytoplasmic and membrane proteins. Plays a role in the quality control of integral membrane proteins. This Aster yellows witches'-broom phytoplasma (strain AYWB) protein is ATP-dependent zinc metalloprotease FtsH.